The primary structure comprises 883 residues: Ankyrin repeat and SAM domain-containing protein 6 (883 aa).

ANK repeat units follow at residues 8–37 (PGLQLLLRACEQGDTDTARRLLEPGADPVA), 68–97 (AGNSALQLAAAGGHEPLVRFLLRRGASVNS), 101–130 (YGWSALMQAARCGHVSVAHLLLDHGADVNA), 134–163 (LGASVLTVASRGGHLGVVKLLLEAGAIVDH), 181–210 (LGITALMAAVQHGHEAVVRLLMEWGADPNH), 215–244 (VGWSPLMLAALLGKLNVAQQLVEKGANPDH), 282–312 (KRRPDIFYALKMGNFQLVKEIADEDPNHVNL), 316–345 (DGATPLMLAAVTGHLPLVQLLVEKHADMDK), 350–379 (HGWTALMQATYHGNKEIVKYLLNQGADVAL), and 383–414 (NGYTAFDLVMLLNDPDTELVRLLASVCMQVNK). Positions 30 to 50 (EPGADPVAGPEAGAEPAGPEA) are disordered. 4 disordered regions span residues 414–439 (KDRGRPSHRPPLPHSKARQPWSIPVL), 490–522 (MRAPPQDRTSHLGPPEAAHATKDSGPGNPRREK), 566–773 (SHTC…ITDE), and 852–883 (SFESSASNTRAPGNGPSMAGWTRPEETVSSRR). The segment covering 566–576 (SHTCHNGKADP) has biased composition (basic and acidic residues). The segment covering 607–630 (PSISRSPASPASSGSFNHSPHSSG) has biased composition (low complexity). Positions 631-640 (GASGIGGMSR) are enriched in gly residues. At serine 649 the chain carries Phosphoserine. Residues 649–661 (SGGSVDSVLSQIA) are compositionally biased toward polar residues. Composition is skewed to low complexity over residues 687–711 (SSSPPELPASLPSSGSGSSSGPSSS) and 720–737 (PPSGTSATSKSTSPTLTP). Residues serine 732 and serine 740 each carry the phosphoserine modification. The span at 748 to 768 (SSVSSSSSHRQSKSSGGSSSG) shows a compositional bias: low complexity. The 64-residue stretch at 771–834 (TDEDELTGIL…LAAISELNAG (64 aa)) folds into the SAM domain. The segment covering 852–862 (SFESSASNTRA) has biased composition (polar residues). A compositionally biased stretch (basic and acidic residues) spans 874–883 (RPEETVSSRR).

In terms of assembly, homooligomer. Interacts with NEK8. Central component of a complex containing at least ANKS6, INVS, NEK8 and NPHP3. ANKS6 may organize complex assembly by linking INVS and NPHP3 to NEK8 and INVS may target the complex to the proximal ciliary axoneme. Interacts (via SAM domain) with BICC1 (via KH domains) in an RNA-dependent manner. Interacts (via SAM domain) with ANKS3 (via SAM domain). Post-translationally, hydroxylated at Asn-129, most probably by HIF1AN. This hydroxylation results in decreased NEK8-binding. In terms of tissue distribution, expressed in kidney (at protein level).

The protein localises to the cell projection. The protein resides in the cilium. It is found in the cytoplasm. In terms of biological role, required for renal function. The chain is Ankyrin repeat and SAM domain-containing protein 6 (Anks6) from Mus musculus (Mouse).